A 245-amino-acid chain; its full sequence is Protein OXIDATIVE STRESS 3 LIKE 6 (245 aa).

The interval 46–90 (QIGIGLRMSNNNNKSPEESSDSSSSIGESSENEEEEEEDDAVSCQ) is disordered. The segment covering 75–86 (SENEEEEEEDDA) has biased composition (acidic residues). Positions 143-151 (NKRRRLVIA) match the Nuclear localization signal motif. A kinase-inducible domain (KID) region spans residues 203-230 (DDHRKIMMMMKNKKELMAQTRSCFCLSS).

It localises to the nucleus. In terms of biological role, probable transcription factor. Promotes slightly the tolerance to cadmium (Cd) and to oxidizing chemicals (e.g. diamide). The sequence is that of Protein OXIDATIVE STRESS 3 LIKE 6 from Arabidopsis thaliana (Mouse-ear cress).